Reading from the N-terminus, the 288-residue chain is Hypersensitive-induced response protein-like protein 1 (288 aa).

Gly-2 carries N-myristoyl glycine lipidation.

In terms of biological role, positive regulator of hypersensitive response (HR)-like cell death. May be involved in potassium ion channel regulation. The chain is Hypersensitive-induced response protein-like protein 1 from Oryza sativa subsp. japonica (Rice).